The following is a 622-amino-acid chain: Dynein axonemal assembly factor 1 (622 aa).

The segment covering 1–11 (MHPEVSEQQAD) has biased composition (polar residues). The segment at 1–80 (MHPEVSEQQA…ARNDRDDRGP (80 aa)) is disordered. The span at 32 to 42 (VRKEEINETKE) shows a compositional bias: basic and acidic residues. Residues 48–59 (STTSCQSQKQQS) show a composition bias toward low complexity. Residues 62–80 (SRLECRSGYARNDRDDRGP) show a composition bias toward basic and acidic residues. LRR repeat units lie at residues 101–123 (ALNDTLYLHFKGFDRIENLEEYT), 124–145 (GLRCLWLECNGIQRIENLQAQS), 146–167 (ELRCLFLQVNLLHKIENLEPLQ), 168–189 (KLDALNLSNNYIKTIENLSCLP), 190–211 (VLNTLQMAHNRLETVADIQHLG), and 215–236 (RLCVLDLSHNMLSDPEILSVLE). The 40-residue stretch at 249–288 (NPVTKHIPNYRRTVTVRLKQLTYLDDRPVFPKDRACAEAW) folds into the LRRCT domain. Over residues 326-336 (EERKKARDKGE) the composition is skewed to basic and acidic residues. Positions 326–363 (EERKKARDKGETPLPDSEESSSTSPEAQEKPPLGETQE) are disordered. Low complexity predominate over residues 337–351 (TPLPDSEESSSTSPE). A phosphoserine mark is found at serine 349, serine 464, and serine 487. Disordered stretches follow at residues 481–505 (SSLSDDSDPELNDSSLPMLEHTPTG) and 535–622 (TATT…FGLD). 2 stretches are compositionally biased toward polar residues: residues 535 to 552 (TATTEVETQGQVFSTTRP) and 568 to 578 (EPNQSLPAQSS).

Belongs to the DNAAF1 family.

Its subcellular location is the cell projection. The protein localises to the cilium. Functionally, cilium-specific protein required for the stability of the ciliary architecture. Plays a role in cytoplasmic preassembly of dynein arms. Involved in regulation of microtubule-based cilia and actin-based brush border microvilli. The polypeptide is Dynein axonemal assembly factor 1 (Dnaaf1) (Peromyscus californicus (California mouse)).